We begin with the raw amino-acid sequence, 717 residues long: Polyribonucleotide nucleotidyltransferase (717 aa).

Residues Asp486 and Asp492 each contribute to the Mg(2+) site. Positions 553 to 612 constitute a KH domain; that stretch reads PKIIQLQIDIDKISLVIGSTGKTVKAITDEFEVRVQIEQDGRITLFGTDSLKMQKAKARI. An S1 motif domain is found at 622–715; that stretch reads GEIYEGVVKK…KFGKIELELV (94 aa). The disordered stretch occupies residues 650 to 683; that stretch reads SNRPKSRDDRYGDMRHSRYGSGRHSRYGRDSRNT. A compositionally biased stretch (basic and acidic residues) spans 654–665; sequence KSRDDRYGDMRH. A compositionally biased stretch (basic residues) spans 666-675; it reads SRYGSGRHSR.

This sequence belongs to the polyribonucleotide nucleotidyltransferase family. Requires Mg(2+) as cofactor.

Its subcellular location is the cytoplasm. The catalysed reaction is RNA(n+1) + phosphate = RNA(n) + a ribonucleoside 5'-diphosphate. Functionally, involved in mRNA degradation. Catalyzes the phosphorolysis of single-stranded polyribonucleotides processively in the 3'- to 5'-direction. This Borrelia turicatae (strain 91E135) protein is Polyribonucleotide nucleotidyltransferase.